Reading from the N-terminus, the 597-residue chain is Tubulin polyglutamylase ttll-4 (597 aa).

Residues 1–18 (MSSGYSSAPSVSHTSSEA) are compositionally biased toward polar residues. 2 disordered regions span residues 1–39 (MSSG…DEQR) and 80–107 (SKSK…FLKS). Positions 26-35 (YEDGVDEEAS) are enriched in acidic residues. The TTL domain occupies 134 to 472 (QSRLTWCHNS…HVPPSFDKLH (339 aa)). Residues lysine 250, 256–257 (RG), 278–281 (QHYI), and 291–293 (KFD) each bind ATP. Arginine 256 provides a ligand contact to a protein. Arginine 317 contacts L-glutamate. 338-339 (TN) provides a ligand contact to ATP. L-glutamate contacts are provided by tyrosine 340, serine 341, and lysine 358. Positions 418, 431, and 433 each coordinate Mg(2+). Position 449 (lysine 449) interacts with L-glutamate.

The protein belongs to the tubulin--tyrosine ligase family. Requires Mg(2+) as cofactor.

The catalysed reaction is L-glutamyl-[protein] + L-glutamate + ATP = gamma-L-glutamyl-L-glutamyl-[protein] + ADP + phosphate + H(+). Functionally, monoglutamylase which modifies tubulin, adding a single glutamate on the gamma-carboxyl group of specific glutamate residues of target proteins. Involved in the side-chain initiation step of the polyglutamylation reaction but not in the elongation step. Preferentially modifies beta-tail tubulin over the alpha-tubulin. Involved in side-chain glutamylation of tubulin in sensory cilia. Together with ttll-5 and ttll-11, required for male mating. This chain is Tubulin polyglutamylase ttll-4 (ttll-4), found in Caenorhabditis briggsae.